A 451-amino-acid polypeptide reads, in one-letter code: Phosphoglucosamine mutase (451 aa).

Ser-101 functions as the Phosphoserine intermediate in the catalytic mechanism. Mg(2+) contacts are provided by Ser-101, Asp-240, Asp-242, and Asp-244. Ser-101 carries the post-translational modification Phosphoserine.

It belongs to the phosphohexose mutase family. Mg(2+) serves as cofactor. Activated by phosphorylation.

It catalyses the reaction alpha-D-glucosamine 1-phosphate = D-glucosamine 6-phosphate. Catalyzes the conversion of glucosamine-6-phosphate to glucosamine-1-phosphate. This Thioalkalivibrio sulfidiphilus (strain HL-EbGR7) protein is Phosphoglucosamine mutase.